Here is a 180-residue protein sequence, read N- to C-terminus: MSRLKKLYTEEIRKTLQEKFGYSNTMQIPVLKKIVISMGLAEAAKDKNLFQAHLDELSMISGQKPLVTKARNSIAGFKLREGQGIGAKVTLRGQRMYDFMDRFCHIVSPRIRDFRGFSSKGDGRGCYSLGLDDQQIFPEVDLDRVKRTQGMNITWVTTAQTDVECTTLLELMGLRFKKAQ.

Belongs to the universal ribosomal protein uL5 family. In terms of assembly, part of the 50S ribosomal subunit; part of the 5S rRNA/L5/L18/L25 subcomplex. Contacts the 5S rRNA and the P site tRNA. Forms a bridge to the 30S subunit in the 70S ribosome.

Its function is as follows. This is one of the proteins that bind and probably mediate the attachment of the 5S RNA into the large ribosomal subunit, where it forms part of the central protuberance. In the 70S ribosome it contacts protein S13 of the 30S subunit (bridge B1b), connecting the 2 subunits; this bridge is implicated in subunit movement. Contacts the P site tRNA; the 5S rRNA and some of its associated proteins might help stabilize positioning of ribosome-bound tRNAs. This Chlamydia abortus (strain DSM 27085 / S26/3) (Chlamydophila abortus) protein is Large ribosomal subunit protein uL5.